We begin with the raw amino-acid sequence, 127 residues long: MTPKKGKKRVKKNIAAGIVHIASTFNNTQITITDVTGNVIAWSSAGARGFKGSRKSTPFAAQVAAGDAAAKAMEHGLKTVSVVVKGPGAGRESALRALSAAGLKITLIRDVTPIPHNGCRPPKRRRV.

It belongs to the universal ribosomal protein uS11 family. In terms of assembly, part of the 30S ribosomal subunit. Interacts with proteins S7 and S18. Binds to IF-3.

In terms of biological role, located on the platform of the 30S subunit, it bridges several disparate RNA helices of the 16S rRNA. Forms part of the Shine-Dalgarno cleft in the 70S ribosome. The sequence is that of Small ribosomal subunit protein uS11 from Anaeromyxobacter dehalogenans (strain 2CP-C).